The following is a 392-amino-acid chain: Arogenate dehydratase/prephenate dehydratase 1, chloroplastic (392 aa).

A chloroplast-targeting transit peptide spans 1–48; that stretch reads MALRCFPIWVCPQTTHHRSPLMGLAEFDADKRRRFCLWECSSSASQRA. The Prephenate dehydratase domain occupies 107–282; sequence RISFQGIPGA…NVTRFLILAR (176 aa). An ACT domain is found at 296 to 387; that stretch reads SIVFSLEEGP…SFIRILGCYP (92 aa).

As to expression, expressed in roots, leaves, stems, flowers and siliques.

Its subcellular location is the plastid. The protein localises to the chloroplast stroma. It carries out the reaction L-arogenate + H(+) = L-phenylalanine + CO2 + H2O. The catalysed reaction is prephenate + H(+) = 3-phenylpyruvate + CO2 + H2O. Its pathway is amino-acid biosynthesis; L-phenylalanine biosynthesis; L-phenylalanine from L-arogenate: step 1/1. The protein operates within amino-acid biosynthesis; L-phenylalanine biosynthesis; phenylpyruvate from prephenate: step 1/1. In terms of biological role, converts the prephenate produced from the shikimate-chorismate pathway into phenylalanine. Dehydratase that uses arogenate and prephenate as substrates. Utilzes more efficiently arogenate than prephenate. This is Arogenate dehydratase/prephenate dehydratase 1, chloroplastic from Arabidopsis thaliana (Mouse-ear cress).